Here is a 46-residue protein sequence, read N- to C-terminus: Phospholipase A2 superbin c (46 aa).

Ca(2+) is bound by residues tyrosine 28, glycine 30, and glycine 32. A disulfide bond links cysteine 29 and cysteine 45.

It depends on Ca(2+) as a cofactor. In terms of tissue distribution, expressed by the venom gland.

It is found in the secreted. It carries out the reaction a 1,2-diacyl-sn-glycero-3-phosphocholine + H2O = a 1-acyl-sn-glycero-3-phosphocholine + a fatty acid + H(+). Snake venom phospholipase A2 (PLA2) that inhibits collagen-induced platelet aggregation. In terms of inhibition of platelet aggregation, superbin c is more potent as superbin d. PLA2 catalyzes the calcium-dependent hydrolysis of the 2-acyl groups in 3-sn-phosphoglycerides. The chain is Phospholipase A2 superbin c from Austrelaps superbus (Lowland copperhead snake).